The primary structure comprises 229 residues: Coiled-coil domain-containing protein 134 (229 aa).

The signal sequence occupies residues 1-22 (MDLLQFLAFLFVLLLSGMGATG). Residue N148 is a short sequence motif, prevents secretion from ER. A glycan (N-linked (GlcNAc...) asparagine) is linked at N148. A disordered region spans residues 193-229 (TDPFQKALREEEKRRKKEEKRKEIRKGPRISRSQSEL). Residues 196-218 (FQKALREEEKRRKKEEKRKEIRK) are a coiled coil. The Nuclear localization signal signature appears at 206–213 (RRKKEEKR).

The protein belongs to the CCDC134 family. As to quaternary structure, interacts with TADA2A. Associates with the PCAF complex via TADA2A binding. Post-translationally, O-glycosylated, with additional sialic acid modifications. Expressed in cervical gland, cervical squamous epithelium, endometrium, stomach, kidney distal convoluted tubule, spermatogenic cells in testis, mammary gland, liver and striated muscle (at protein level). Also detected in placenta. Highest expression in testis relative to other tissues. Detected in T cells and dendritic cells; highly expressed in activated CD8(+) T cells, and also expressed at lower levels in CD4(+) T cells.

It is found in the endoplasmic reticulum lumen. Its subcellular location is the secreted. The protein resides in the cytoplasm. It localises to the nucleus. Its function is as follows. Molecular adapter required to prevent protein hyperglycosylation of HSP90B1: during translation, associates with nascent HSP90B1 and the STT3A catalytic component of the OST-A complex and tethers them to a specialized translocon that forms a microenvironment for HSP90B1 folding. In the CCDC134-containing translocon, STT3A associates with the SRT pseudosubstrate motif of HSP90B1, preventing access to facultative glycosylation sites until folding is completed, preventing hyperglycosylation and subsequent degradation of HSP90B1. In extracellular secreted form, promotes proliferation and activation of CD8(+) T-cells, suggesting a cytokine-like function. May inhibit ERK and JNK signaling activity. May suppress cell migration and invasion activity, via its effects on ERK and JNK signaling. May also localize in the nucleus: enhances stability of the PCAF histone acetyltransferase (HAT) complex member TADA2A and thus promotes PCAF-mediated histone acetyltransferase activity. Has a critical role in the regulation of osteogenesis and bone development. This is Coiled-coil domain-containing protein 134 from Homo sapiens (Human).